Here is a 264-residue protein sequence, read N- to C-terminus: Hydroxyethylthiazole kinase (264 aa).

Methionine 43 lines the substrate pocket. Residues lysine 119 and serine 165 each coordinate ATP. A substrate-binding site is contributed by glycine 192.

The protein belongs to the Thz kinase family. It depends on Mg(2+) as a cofactor.

It catalyses the reaction 5-(2-hydroxyethyl)-4-methylthiazole + ATP = 4-methyl-5-(2-phosphooxyethyl)-thiazole + ADP + H(+). It participates in cofactor biosynthesis; thiamine diphosphate biosynthesis; 4-methyl-5-(2-phosphoethyl)-thiazole from 5-(2-hydroxyethyl)-4-methylthiazole: step 1/1. Functionally, catalyzes the phosphorylation of the hydroxyl group of 4-methyl-5-beta-hydroxyethylthiazole (THZ). The sequence is that of Hydroxyethylthiazole kinase from Methanocorpusculum labreanum (strain ATCC 43576 / DSM 4855 / Z).